A 383-amino-acid polypeptide reads, in one-letter code: GDSL esterase/lipase At1g28610 (383 aa).

A signal peptide spans 1 to 22 (MASLDSLVSFFLSTLFVTIVSS). Residue Ser38 is the Nucleophile of the active site. Residues Asn134, Asn184, and Asn315 are each glycosylated (N-linked (GlcNAc...) asparagine). Catalysis depends on residues Asp340 and His343.

This sequence belongs to the 'GDSL' lipolytic enzyme family.

It is found in the secreted. In Arabidopsis thaliana (Mouse-ear cress), this protein is GDSL esterase/lipase At1g28610.